The following is a 648-amino-acid chain: Leucine aminopeptidase 2 (648 aa).

A peptide contacts are provided by residues 143–145 (QCQ) and 269–274 (PYGGME). His298 is a binding site for Zn(2+). Glu299 (proton acceptor) is an active-site residue. Positions 302 and 321 each coordinate Zn(2+). Tyr408 functions as the Proton donor in the catalytic mechanism.

This sequence belongs to the peptidase M1 family. Zn(2+) is required as a cofactor.

It is found in the cytoplasm. The protein resides in the nucleus. It catalyses the reaction an epoxide + H2O = an ethanediol. Aminopeptidase that preferentially cleaves di- and tripeptides. Also has low epoxide hydrolase activity (in vitro). Can hydrolyze the epoxide leukotriene LTA(4) but it forms preferentially 5,6-dihydroxy-7,9,11,14-eicosatetraenoic acid rather than the cytokine leukotriene B(4) as the product compared to the homologous mammalian enzyme (in vitro). The chain is Leucine aminopeptidase 2 from Lodderomyces elongisporus (strain ATCC 11503 / CBS 2605 / JCM 1781 / NBRC 1676 / NRRL YB-4239) (Yeast).